A 129-amino-acid polypeptide reads, in one-letter code: C-type natriuretic peptide 1 (129 aa).

The first 24 residues, 1–24 (MSYKRGTCLGFIMLLMVSHHHTKG), serve as a signal peptide directing secretion. Positions 25–107 (KPLSSLQNLS…SRRYRQRNKK (83 aa)) are excised as a propeptide. A disulfide bond links Cys113 and Cys129.

This sequence belongs to the natriuretic peptide family.

The protein localises to the secreted. Functionally, hormone which plays a role in endochondral ossification through regulation of cartilaginous growth plate chondrocytes proliferation and differentiation. May also be vasoactive and natriuretic. May be important for freshwater adaptation. In Aquarana catesbeiana (American bullfrog), this protein is C-type natriuretic peptide 1.